The chain runs to 437 residues: 5-hydroxytryptamine receptor 3B (437 aa).

Residues 1–21 form the signal peptide; sequence MILLWSCLLVAVVGILGTATP. The Extracellular segment spans residues 22–235; it reads QPGNSSLHRL…RFNVVIRRCP (214 aa). 3 N-linked (GlcNAc...) asparagine glycosylation sites follow: asparagine 25, asparagine 92, and asparagine 134. An intrachain disulfide couples cysteine 151 to cysteine 165. Residues 236–255 form a helical membrane-spanning segment; it reads LAYVVSLLIPSIFLMLVDLG. The Cytoplasmic portion of the chain corresponds to 256-266; the sequence is SFYLPPNCRAR. A helical membrane pass occupies residues 267 to 284; sequence IVFKTNVLVGYTVFRVNM. Residues 285–295 lie on the Extracellular side of the membrane; that stretch reads SDEVPRSAGCT. Residues 296-324 traverse the membrane as a helical segment; that stretch reads SLIGVFFTVCMALLVLSLSKSILLIKFLY. At 325–410 the chain is on the cytoplasmic side; it reads EERHSEQERP…WLAILCHFDQ (86 aa). Residues 377–409 are HA-stretch; determines single-channel conductance in 5-HT3 receptors; it reads FWFQLQSINNSLRTRDQVYQKEVEWLAILCHFD. A helical transmembrane segment spans residues 411–434; it reads LLFRIYLAVLGLYTVTLCSLWALW. Residues 435–437 lie on the Extracellular side of the membrane; it reads SRM.

This sequence belongs to the ligand-gated ion channel (TC 1.A.9) family. 5-hydroxytryptamine receptor (TC 1.A.9.2) subfamily. HTR3B sub-subfamily. In terms of assembly, forms homopentameric as well as heteropentameric serotonin-activated cation-selective channel complexes with HTR3A. The homomeric complex is not functional. Heteropentameric complexes display properties which resemble that of neuronal serotonin-activated channels in vivo. N-glycosylation is required for membrane localization. Expressed in peripheral neurons, but not in neurons of the central nervous system.

It localises to the postsynaptic cell membrane. It is found in the cell membrane. It carries out the reaction Na(+)(in) = Na(+)(out). The enzyme catalyses K(+)(in) = K(+)(out). The catalysed reaction is Ca(2+)(in) = Ca(2+)(out). Forms serotonin (5-hydroxytryptamine/5-HT3)-activated cation-selective channel complexes, which when activated cause fast, depolarizing responses in neurons. This chain is 5-hydroxytryptamine receptor 3B, found in Rattus norvegicus (Rat).